The sequence spans 374 residues: Histidinol-phosphate aminotransferase 1 (374 aa).

Position 232 is an N6-(pyridoxal phosphate)lysine (Lys-232).

Belongs to the class-II pyridoxal-phosphate-dependent aminotransferase family. Histidinol-phosphate aminotransferase subfamily. Homodimer. Requires pyridoxal 5'-phosphate as cofactor.

It catalyses the reaction L-histidinol phosphate + 2-oxoglutarate = 3-(imidazol-4-yl)-2-oxopropyl phosphate + L-glutamate. It functions in the pathway amino-acid biosynthesis; L-histidine biosynthesis; L-histidine from 5-phospho-alpha-D-ribose 1-diphosphate: step 7/9. The sequence is that of Histidinol-phosphate aminotransferase 1 (hisC1) from Ralstonia nicotianae (strain ATCC BAA-1114 / GMI1000) (Ralstonia solanacearum).